A 434-amino-acid polypeptide reads, in one-letter code: Methylenetetrahydrofolate--tRNA-(uracil-5-)-methyltransferase TrmFO (434 aa).

10–15 (GAGLAG) lines the FAD pocket.

It belongs to the MnmG family. TrmFO subfamily. It depends on FAD as a cofactor.

The protein resides in the cytoplasm. It carries out the reaction uridine(54) in tRNA + (6R)-5,10-methylene-5,6,7,8-tetrahydrofolate + NADH + H(+) = 5-methyluridine(54) in tRNA + (6S)-5,6,7,8-tetrahydrofolate + NAD(+). It catalyses the reaction uridine(54) in tRNA + (6R)-5,10-methylene-5,6,7,8-tetrahydrofolate + NADPH + H(+) = 5-methyluridine(54) in tRNA + (6S)-5,6,7,8-tetrahydrofolate + NADP(+). Catalyzes the folate-dependent formation of 5-methyl-uridine at position 54 (M-5-U54) in all tRNAs. The protein is Methylenetetrahydrofolate--tRNA-(uracil-5-)-methyltransferase TrmFO of Bacillus cereus (strain ATCC 10987 / NRS 248).